The primary structure comprises 332 residues: Geranylgeranyl diphosphate synthase (332 aa).

Isopentenyl diphosphate contacts are provided by K45, R48, and H77. Mg(2+) contacts are provided by D84 and D88. R93 is an an all-trans-polyprenyl diphosphate binding site. R94 contributes to the isopentenyl diphosphate binding site. An all-trans-polyprenyl diphosphate is bound by residues K177, T178, Q215, K232, and K242.

Belongs to the FPP/GGPP synthase family. The cofactor is Mg(2+).

It catalyses the reaction isopentenyl diphosphate + (2E,6E)-farnesyl diphosphate = (2E,6E,10E)-geranylgeranyl diphosphate + diphosphate. It functions in the pathway isoprenoid biosynthesis; geranylgeranyl diphosphate biosynthesis; geranylgeranyl diphosphate from farnesyl diphosphate and isopentenyl diphosphate: step 1/1. Catalyzes the condensation of isopentenyl pyrophosphate with the allylic pyrophosphates to yield geranylgeranyl diphosphate (GGPP) which is a precursor of the ether-linked lipids. In Saccharolobus solfataricus (strain ATCC 35092 / DSM 1617 / JCM 11322 / P2) (Sulfolobus solfataricus), this protein is Geranylgeranyl diphosphate synthase (gds).